Reading from the N-terminus, the 428-residue chain is 3-phosphoshikimate 1-carboxyvinyltransferase (428 aa).

3 residues coordinate 3-phosphoshikimate: Lys20, Ser21, and Arg25. A phosphoenolpyruvate-binding site is contributed by Lys20. Phosphoenolpyruvate-binding residues include Gly93 and Arg122. Ser167, Gln169, Asp317, and Lys344 together coordinate 3-phosphoshikimate. Residue Gln169 coordinates phosphoenolpyruvate. Asp317 serves as the catalytic Proton acceptor. The phosphoenolpyruvate site is built by Arg348 and Arg390.

The protein belongs to the EPSP synthase family. Monomer.

It is found in the cytoplasm. It catalyses the reaction 3-phosphoshikimate + phosphoenolpyruvate = 5-O-(1-carboxyvinyl)-3-phosphoshikimate + phosphate. Its pathway is metabolic intermediate biosynthesis; chorismate biosynthesis; chorismate from D-erythrose 4-phosphate and phosphoenolpyruvate: step 6/7. Its function is as follows. Catalyzes the transfer of the enolpyruvyl moiety of phosphoenolpyruvate (PEP) to the 5-hydroxyl of shikimate-3-phosphate (S3P) to produce enolpyruvyl shikimate-3-phosphate and inorganic phosphate. The polypeptide is 3-phosphoshikimate 1-carboxyvinyltransferase (Leptospira biflexa serovar Patoc (strain Patoc 1 / ATCC 23582 / Paris)).